We begin with the raw amino-acid sequence, 119 residues long: DNA-binding protein TubR (119 aa).

Homodimer. Binds to TubZ filaments via the C-terminus of TubZ. DNA is not required for binding to TubZ.

In terms of biological role, a DNA-binding protein that is part of the type III plasmid partition system used to ensure correct segregation of the pBc10987 plasmid. Binds TubZ filaments but does not influence the GTPase activity of TubZ with or without DNA. Cooperatively binds to multiple regions in tubC (centromere-like site) upstream of its own gene with consensus sequence N(T/A)ATTNC(C/G)GNAAT(A/T)N; probably forms an extended DNA-protein filament. Binds sites in its own promoter region and presumably represses its expression; its effect on RNA expression has not been shown. Does not specifically bind to the putative origin of replication on pBc10987. This is DNA-binding protein TubR from Bacillus cereus (strain ATCC 10987 / NRS 248).